A 126-amino-acid chain; its full sequence is Aspartate 1-decarboxylase (126 aa).

The active-site Schiff-base intermediate with substrate; via pyruvic acid is the S25. The residue at position 25 (S25) is a Pyruvic acid (Ser). T57 contacts substrate. Y58 functions as the Proton donor in the catalytic mechanism. 73-75 (GGA) contributes to the substrate binding site.

Belongs to the PanD family. In terms of assembly, heterooctamer of four alpha and four beta subunits. Pyruvate is required as a cofactor. In terms of processing, is synthesized initially as an inactive proenzyme, which is activated by self-cleavage at a specific serine bond to produce a beta-subunit with a hydroxyl group at its C-terminus and an alpha-subunit with a pyruvoyl group at its N-terminus.

The protein resides in the cytoplasm. It catalyses the reaction L-aspartate + H(+) = beta-alanine + CO2. The protein operates within cofactor biosynthesis; (R)-pantothenate biosynthesis; beta-alanine from L-aspartate: step 1/1. Its function is as follows. Catalyzes the pyruvoyl-dependent decarboxylation of aspartate to produce beta-alanine. In Acinetobacter baumannii (strain AB307-0294), this protein is Aspartate 1-decarboxylase.